A 1609-amino-acid chain; its full sequence is Chitin synthase 5 (1609 aa).

Disordered regions lie at residues 1 to 188 (MNPF…DRER), 248 to 280 (SGLG…GRDE), and 294 to 320 (VSLR…ESKT). The Cytoplasmic portion of the chain corresponds to 1–326 (MNPFESLPDA…ESKTSRIAPG (326 aa)). Residues 34–44 (PGSTGRPQNPI) are compositionally biased toward polar residues. Residues 61 to 82 (PQQQQQQQQQQQQQQQRSQQPF) are compositionally biased toward low complexity. The span at 100–111 (AYLNSTSSQPTQ) shows a compositional bias: polar residues. Residues 134–146 (DSVKSYGDDKRSI) are compositionally biased toward basic and acidic residues. Residues 147-163 (NDPNSSSTALTQVNSLD) show a composition bias toward polar residues. Residues 253–267 (TGPTNVPPGGLGRAP) show a composition bias toward low complexity. Over residues 307-320 (PSKEVPRDLGESKT) the composition is skewed to basic and acidic residues. A helical membrane pass occupies residues 327 to 347 (PVGGWMIYCYILTICCPGPFL). Residues 348 to 364 (RIFGIRTPEQQRAWREK) are Extracellular-facing. The helical transmembrane segment at 365–385 (MGLIGIITLIMAAVGFLTFGF) threads the bilayer. Residues 386–624 (TQTVCGQQPD…ASKVELYLSL (239 aa)) are Cytoplasmic-facing. The chain crosses the membrane as a helical span at residues 625–645 (VFIIGVVAIKFFMAVMFGWFI). Over 646–1176 (SWRLGNYANE…MRFVVFMELT (531 aa)) the chain is Extracellular. Asn654 is a glycosylation site (N-linked (GlcNAc...) asparagine). The segment at 729–767 (GVASPLGGSPPGSPSVAGGRSSASLAPAHSRRSSFSGSP) is disordered. Positions 742–752 (PSVAGGRSSAS) are enriched in low complexity. 2 N-linked (GlcNAc...) asparagine glycosylation sites follow: Asn1015 and Asn1144. A helical transmembrane segment spans residues 1177 to 1197 (GTLVLPAAIAFTLYVVVQAFL). Over 1198–1202 (PNVPT) the chain is Cytoplasmic. A helical membrane pass occupies residues 1203 to 1223 (PTIPLILLALILGLPGILIVV). Residues 1224–1227 (TSRK) are Extracellular-facing. The chain crosses the membrane as a helical span at residues 1228 to 1248 (IAYVGWMLIYLLSLPIWNFVL). Over 1249–1609 (PLYAYWHMDD…PPGAAPPSFD (361 aa)) the chain is Cytoplasmic. 2 disordered regions span residues 1354 to 1381 (PNAM…PSGA) and 1399 to 1609 (TDAK…PSFD). Composition is skewed to polar residues over residues 1502-1514 (NVST…TVSE) and 1530-1552 (GSAS…QTRP). The segment covering 1568 to 1588 (AQGVRQVQRGARRSQMPNSAA) has biased composition (low complexity).

This sequence belongs to the chitin synthase family. Class IV subfamily.

It is found in the cell membrane. Its subcellular location is the cytoplasmic vesicle membrane. It carries out the reaction [(1-&gt;4)-N-acetyl-beta-D-glucosaminyl](n) + UDP-N-acetyl-alpha-D-glucosamine = [(1-&gt;4)-N-acetyl-beta-D-glucosaminyl](n+1) + UDP + H(+). Functionally, polymerizes chitin, a structural polymer of the cell wall and septum, by transferring the sugar moiety of UDP-GlcNAc to the non-reducing end of the growing chitin polymer. The protein is Chitin synthase 5 of Mycosarcoma maydis (Corn smut fungus).